Here is a 208-residue protein sequence, read N- to C-terminus: Putative thymidylate kinase (208 aa).

The tract at residues 8–15 (GIDGSGVS) is defective ATP-binding.

The protein belongs to the thymidylate kinase family.

The enzyme catalyses dTMP + ATP = dTDP + ADP. The sequence is that of Putative thymidylate kinase (tmk) from Aeropyrum pernix (strain ATCC 700893 / DSM 11879 / JCM 9820 / NBRC 100138 / K1).